We begin with the raw amino-acid sequence, 192 residues long: Adenylate kinase (192 aa).

10–15 (GAGKGT) lines the ATP pocket. An NMP region spans residues 30–59 (STGDMLREAIEKETEIGKQAKIFIESGALV). Residues T31, R36, 57–59 (ALV), 85–88 (GYPR), and Q92 contribute to the AMP site. The tract at residues 126-142 (KRVEEVVAVGGKIRSDD) is LID. R127 contributes to the ATP binding site. AMP-binding residues include R139 and R150. Position 178 (A178) interacts with ATP.

The protein belongs to the adenylate kinase family. As to quaternary structure, monomer.

It localises to the cytoplasm. The catalysed reaction is AMP + ATP = 2 ADP. It functions in the pathway purine metabolism; AMP biosynthesis via salvage pathway; AMP from ADP: step 1/1. Functionally, catalyzes the reversible transfer of the terminal phosphate group between ATP and AMP. Plays an important role in cellular energy homeostasis and in adenine nucleotide metabolism. The sequence is that of Adenylate kinase from Bartonella bacilliformis (strain ATCC 35685 / KC583 / Herrer 020/F12,63).